We begin with the raw amino-acid sequence, 203 residues long: Small ribosomal subunit protein uS4c (203 aa).

The disordered stretch occupies residues 19-43 (PGLTNKSPKAGSDLRKQPRSRKKSQ). Positions 89–152 (MRLDNILFRL…KSRTLIQNSL (64 aa)) constitute an S4 RNA-binding domain.

The protein belongs to the universal ribosomal protein uS4 family. In terms of assembly, part of the 30S ribosomal subunit. Contacts protein S5. The interaction surface between S4 and S5 is involved in control of translational fidelity.

The protein localises to the plastid. It localises to the chloroplast. In terms of biological role, one of the primary rRNA binding proteins, it binds directly to 16S rRNA where it nucleates assembly of the body of the 30S subunit. Functionally, with S5 and S12 plays an important role in translational accuracy. This chain is Small ribosomal subunit protein uS4c (rps4), found in Jasminum nudiflorum (Winter jasmine).